Reading from the N-terminus, the 197-residue chain is uncharacterized protein (197 aa).

Residues 11-31 form a helical membrane-spanning segment; that stretch reads ICGFSLVALTIAGIVGGVYLV.

The protein localises to the membrane. This is an uncharacterized protein from Mycoplasma pneumoniae (strain ATCC 29342 / M129 / Subtype 1) (Mycoplasmoides pneumoniae).